The following is a 405-amino-acid chain: Protochlorophyllide reductase A, chloroplastic (405 aa).

The N-terminal 69 residues, 1-69 (MALQAASLVS…LRNNKAIIRA (69 aa)), are a transit peptide targeting the chloroplast.

It belongs to the short-chain dehydrogenases/reductases (SDR) family. POR subfamily. In terms of assembly, forms large complexes including TOC33, pPORA and OEP161 during pPORA import into plastids at the plastid envelope membrane. Interacts with CPP1 during plastid import. As to expression, expressed in young seedlings. Not detected in leaves.

It is found in the plastid. Its subcellular location is the chloroplast. It carries out the reaction chlorophyllide a + NADP(+) = protochlorophyllide a + NADPH + H(+). The protein operates within porphyrin-containing compound metabolism; chlorophyll biosynthesis. Functionally, phototransformation of protochlorophyllide (Pchlide) to chlorophyllide (Chlide). PORA may also function as a photoprotectant during the transitory stage from dark to light. Functions in skotomorphogenesis, photomorphogenesis and throughout the plant life under specific light conditions. The polypeptide is Protochlorophyllide reductase A, chloroplastic (PORA) (Arabidopsis thaliana (Mouse-ear cress)).